The primary structure comprises 208 residues: Holliday junction branch migration complex subunit RuvA (208 aa).

Residues 1 to 64 form a domain I region; it reads MIGKLKGIVD…EDMIRLYGFR (64 aa). Residues 65–143 form a domain II region; the sequence is VDAEREWFRL…AFAPIDPALI (79 aa). Residues 144-152 form a flexible linker region; sequence ALTGAVEDR. Residues 153 to 208 are domain III; that stretch reads TAPQPVADAISALVNLGYAQIQASAAIAAALKGLGEEAGTVEAKTLIRLGLRELAR.

The protein belongs to the RuvA family. In terms of assembly, homotetramer. Forms an RuvA(8)-RuvB(12)-Holliday junction (HJ) complex. HJ DNA is sandwiched between 2 RuvA tetramers; dsDNA enters through RuvA and exits via RuvB. An RuvB hexamer assembles on each DNA strand where it exits the tetramer. Each RuvB hexamer is contacted by two RuvA subunits (via domain III) on 2 adjacent RuvB subunits; this complex drives branch migration. In the full resolvosome a probable DNA-RuvA(4)-RuvB(12)-RuvC(2) complex forms which resolves the HJ.

Its subcellular location is the cytoplasm. Functionally, the RuvA-RuvB-RuvC complex processes Holliday junction (HJ) DNA during genetic recombination and DNA repair, while the RuvA-RuvB complex plays an important role in the rescue of blocked DNA replication forks via replication fork reversal (RFR). RuvA specifically binds to HJ cruciform DNA, conferring on it an open structure. The RuvB hexamer acts as an ATP-dependent pump, pulling dsDNA into and through the RuvAB complex. HJ branch migration allows RuvC to scan DNA until it finds its consensus sequence, where it cleaves and resolves the cruciform DNA. This is Holliday junction branch migration complex subunit RuvA from Methylorubrum extorquens (strain CM4 / NCIMB 13688) (Methylobacterium extorquens).